The chain runs to 241 residues: Isoprenyl transferase (241 aa).

D17 is an active-site residue. D17 serves as a coordination point for Mg(2+). Substrate-binding positions include 18-21 (GNGR), W22, R30, H34, and 62-64 (STE). The active-site Proton acceptor is N65. Substrate-binding positions include W66, R68, R186, and 192-194 (RLS). Residue E205 participates in Mg(2+) binding.

Belongs to the UPP synthase family. As to quaternary structure, homodimer. Mg(2+) is required as a cofactor.

Catalyzes the condensation of isopentenyl diphosphate (IPP) with allylic pyrophosphates generating different type of terpenoids. This Leptospira interrogans serogroup Icterohaemorrhagiae serovar copenhageni (strain Fiocruz L1-130) protein is Isoprenyl transferase.